A 189-amino-acid chain; its full sequence is Ornithine decarboxylase antizyme 2 (189 aa).

At serine 186 the chain carries Phosphoserine.

Belongs to the ODC antizyme family. In terms of assembly, interacts with ODC1 and thereby sterically blocks ODC homodimerization. Interacts with AZIN2; this interaction disrupts the interaction between the antizyme and ODC1.

Its subcellular location is the nucleus. Its function is as follows. Ornithine decarboxylase (ODC) antizyme protein that negatively regulates ODC activity and intracellular polyamine biosynthesis and uptake in response to increased intracellular polyamine levels. Binds to ODC monomers, inhibiting the assembly of the functional ODC homodimers. Does not target the ODC monomers for degradation, which allows a protein synthesis-independent restoration of ODC activity. Involved in the translocation of AZIN2 from ER-Golgi intermediate compartment (ERGIC) to the cytosol. The chain is Ornithine decarboxylase antizyme 2 (OAZ2) from Homo sapiens (Human).